Reading from the N-terminus, the 413-residue chain is Arginine biosynthesis bifunctional protein ArgJ, mitochondrial (413 aa).

Substrate contacts are provided by Thr-168, Lys-194, Thr-205, and Glu-292. Thr-205 acts as the Nucleophile in catalysis.

The protein belongs to the ArgJ family. Heterodimer of an alpha and a beta chain. The alpha and beta chains are autoproteolytically processed from a single precursor protein within the mitochondrion.

Its subcellular location is the mitochondrion matrix. The enzyme catalyses N(2)-acetyl-L-ornithine + L-glutamate = N-acetyl-L-glutamate + L-ornithine. It catalyses the reaction L-glutamate + acetyl-CoA = N-acetyl-L-glutamate + CoA + H(+). Its pathway is amino-acid biosynthesis; L-arginine biosynthesis; L-ornithine and N-acetyl-L-glutamate from L-glutamate and N(2)-acetyl-L-ornithine (cyclic): step 1/1. The protein operates within amino-acid biosynthesis; L-arginine biosynthesis; N(2)-acetyl-L-ornithine from L-glutamate: step 1/4. Functionally, catalyzes two activities which are involved in the cyclic version of arginine biosynthesis: the synthesis of acetylglutamate from glutamate and acetyl-CoA, and of ornithine by transacetylation between acetylornithine and glutamate. This Clavispora lusitaniae (strain ATCC 42720) (Yeast) protein is Arginine biosynthesis bifunctional protein ArgJ, mitochondrial.